The primary structure comprises 59 residues: Large ribosomal subunit protein uL30 (59 aa).

The protein belongs to the universal ribosomal protein uL30 family. In terms of assembly, part of the 50S ribosomal subunit.

The chain is Large ribosomal subunit protein uL30 from Pectobacterium atrosepticum (strain SCRI 1043 / ATCC BAA-672) (Erwinia carotovora subsp. atroseptica).